A 398-amino-acid chain; its full sequence is Alpha-monoglucosyldiacylglycerol synthase (398 aa).

The protein belongs to the glycosyltransferase group 1 family. Glycosyltransferase 4 subfamily. Mg(2+) is required as a cofactor.

The protein resides in the cell membrane. It catalyses the reaction a 1,2-diacyl-sn-glycerol + UDP-alpha-D-glucose = a 1,2-diacyl-3-O-(alpha-D-glucopyranosyl)-sn-glycerol + UDP + H(+). Its activity is regulated as follows. Activated by the negatively charged lipids phosphatidylglycerol (PG), cardiolipin (CL), dodecylphosphate-rac-glycerol (PDG), 1,2-dioleoyl-phosphatidylglycerol (DOPG) and phosphatidylserine (PS). Glucosyltransferase involved in the biosynthesis of the non-bilayer-prone membrane lipid alpha-monoglucosyldiacylglycerol. This is a major component for maintaining a certain anionic lipid surface charge density, for balancing the bilayer to non-bilayer phase equilibria and for keeping a constant lipid bilayer spontaneous curvature (curvature packing stress). Catalyzes the transfer of a glucosyl residue from UDP-Glc to diacylglycerol (DAG) acceptor to form the corresponding alpha-glucosyl-DAG (1,2-diacyl-3-O-(alpha-D-glucopyranosyl)-sn-glycerol). It can only use UDP-Glc as sugar donor and DAG is the preferred substrate. In Acholeplasma laidlawii, this protein is Alpha-monoglucosyldiacylglycerol synthase (mgs).